We begin with the raw amino-acid sequence, 406 residues long: Tryptophan synthase beta chain (406 aa).

K99 carries the N6-(pyridoxal phosphate)lysine modification.

This sequence belongs to the TrpB family. Tetramer of two alpha and two beta chains. Pyridoxal 5'-phosphate serves as cofactor.

The catalysed reaction is (1S,2R)-1-C-(indol-3-yl)glycerol 3-phosphate + L-serine = D-glyceraldehyde 3-phosphate + L-tryptophan + H2O. Its pathway is amino-acid biosynthesis; L-tryptophan biosynthesis; L-tryptophan from chorismate: step 5/5. Its function is as follows. The beta subunit is responsible for the synthesis of L-tryptophan from indole and L-serine. The polypeptide is Tryptophan synthase beta chain (Chelativorans sp. (strain BNC1)).